Reading from the N-terminus, the 296-residue chain is Ethanolamine ammonia-lyase small subunit (296 aa).

The adenosylcob(III)alamin site is built by valine 209 and glutamate 230.

This sequence belongs to the EutC family. In terms of assembly, the basic unit is a heterodimer which dimerizes to form tetramers. The heterotetramers trimerize; 6 large subunits form a core ring with 6 small subunits projecting outwards. Adenosylcob(III)alamin is required as a cofactor.

It localises to the bacterial microcompartment. The enzyme catalyses ethanolamine = acetaldehyde + NH4(+). The protein operates within amine and polyamine degradation; ethanolamine degradation. Its function is as follows. Catalyzes the deamination of various vicinal amino-alcohols to oxo compounds. Allows this organism to utilize ethanolamine as the sole source of nitrogen and carbon in the presence of external vitamin B12. In Lachnoclostridium phytofermentans (strain ATCC 700394 / DSM 18823 / ISDg) (Clostridium phytofermentans), this protein is Ethanolamine ammonia-lyase small subunit.